The chain runs to 230 residues: MAKASLDKDPFDVASMFDDVGDKYDLTNTVLSFGQDRVWRRRTRERLDLKPGEKVLDLAAGTAVSTVELAKSGAWCVACDFSQGMLAAGKHRNVPMVVGDGMTLPFADNSFDAVTISYGLRNIHDFRAGLREMARVTKPGGRLTVAEFSTPVIPVFGTLYKEYLMRLLPKVARVVSSNPEAYIYLAESIRAWPDQEDLAREINANGWSDCGWQNLTFGIVAMHSAIKPGN.

Residues T62, D80, 100–101, and S117 each bind S-adenosyl-L-methionine; that span reads DG.

It belongs to the class I-like SAM-binding methyltransferase superfamily. MenG/UbiE family.

It catalyses the reaction a 2-demethylmenaquinol + S-adenosyl-L-methionine = a menaquinol + S-adenosyl-L-homocysteine + H(+). The protein operates within quinol/quinone metabolism; menaquinone biosynthesis; menaquinol from 1,4-dihydroxy-2-naphthoate: step 2/2. Its function is as follows. Methyltransferase required for the conversion of demethylmenaquinol (DMKH2) to menaquinol (MKH2). The chain is Demethylmenaquinone methyltransferase from Corynebacterium efficiens (strain DSM 44549 / YS-314 / AJ 12310 / JCM 11189 / NBRC 100395).